The chain runs to 176 residues: 3-hydroxydecanoyl-[acyl-carrier-protein] dehydratase (176 aa).

Residue His-75 is part of the active site.

It belongs to the thioester dehydratase family. FabA subfamily. In terms of assembly, homodimer.

It localises to the cytoplasm. It catalyses the reaction a (3R)-hydroxyacyl-[ACP] = a (2E)-enoyl-[ACP] + H2O. It carries out the reaction (3R)-hydroxydecanoyl-[ACP] = (2E)-decenoyl-[ACP] + H2O. The enzyme catalyses (2E)-decenoyl-[ACP] = (3Z)-decenoyl-[ACP]. Its pathway is lipid metabolism; fatty acid biosynthesis. Its function is as follows. Necessary for the introduction of cis unsaturation into fatty acids. Catalyzes the dehydration of (3R)-3-hydroxydecanoyl-ACP to E-(2)-decenoyl-ACP and then its isomerization to Z-(3)-decenoyl-ACP. Can catalyze the dehydratase reaction for beta-hydroxyacyl-ACPs with saturated chain lengths up to 16:0, being most active on intermediate chain length. This Haemophilus ducreyi (strain 35000HP / ATCC 700724) protein is 3-hydroxydecanoyl-[acyl-carrier-protein] dehydratase.